We begin with the raw amino-acid sequence, 40 residues long: Alpha-conotoxin-like Lp1.6b (40 aa).

Positions 1–23 are excised as a propeptide; that stretch reads VVLGPASDGRNAAANNKASDLIR. Glutamine 24 is modified (pyrrolidone carboxylic acid). Intrachain disulfides connect cysteine 26/cysteine 32 and cysteine 27/cysteine 39.

It belongs to the conotoxin A superfamily. As to expression, expressed by the venom duct.

It is found in the secreted. Its function is as follows. Alpha-conotoxins act on postsynaptic membranes, they bind to the nicotinic acetylcholine receptors (nAChR) and thus inhibit them. This Conus leopardus (Leopard cone) protein is Alpha-conotoxin-like Lp1.6b.